The sequence spans 380 residues: Chorismate synthase (380 aa).

R47 is a binding site for NADP(+). FMN is bound by residues 124 to 126 (RSS), G288, 303 to 307 (KPTST), and R329.

Belongs to the chorismate synthase family. In terms of assembly, homotetramer. FMNH2 is required as a cofactor.

It carries out the reaction 5-O-(1-carboxyvinyl)-3-phosphoshikimate = chorismate + phosphate. It participates in metabolic intermediate biosynthesis; chorismate biosynthesis; chorismate from D-erythrose 4-phosphate and phosphoenolpyruvate: step 7/7. In terms of biological role, catalyzes the anti-1,4-elimination of the C-3 phosphate and the C-6 proR hydrogen from 5-enolpyruvylshikimate-3-phosphate (EPSP) to yield chorismate, which is the branch point compound that serves as the starting substrate for the three terminal pathways of aromatic amino acid biosynthesis. This reaction introduces a second double bond into the aromatic ring system. This chain is Chorismate synthase, found in Leptospira interrogans serogroup Icterohaemorrhagiae serovar copenhageni (strain Fiocruz L1-130).